The chain runs to 417 residues: Lactose permease (417 aa).

At Met1 the chain carries N-formylmethionine; partial. The Cytoplasmic segment spans residues 1–7 (MYYLKNT). A helical transmembrane segment spans residues 8–34 (NFWMFGLFFFFYFFIMGAYFPFFPIWL). The Periplasmic portion of the chain corresponds to 35 to 41 (HDINHIS). Residues 42–70 (KSDTGIIFAAISLFSLLFQPLFGLLSDKL) traverse the membrane as a helical segment. The Cytoplasmic portion of the chain corresponds to 71–74 (GLRK). A helical transmembrane segment spans residues 75–100 (YLLWIITGMLVMFAPFFIFIFGPLLQ). Topologically, residues 101 to 104 (YNIL) are periplasmic. A helical transmembrane segment spans residues 105–129 (VGSIVGGIYLGFCFNAGAPAVEAFI). At 130 to 140 (EKVSRRSNFEF) the chain is on the cytoplasmic side. The chain crosses the membrane as a helical span at residues 141 to 163 (GRARMFGCVGWALCASIVGIMFT). The Periplasmic segment spans residues 164-166 (INN). Residues 167-186 (QFVFWLGSGCALILAVLLFF) form a helical membrane-spanning segment. Topologically, residues 187–220 (AKTDAPSSATVANAVGANHSAFSLKLALELFRQP) are cytoplasmic. Residues 221–249 (KLWFLSLYVIGVSCTYDVFDQQFANFFTS) traverse the membrane as a helical segment. Topologically, residues 250–253 (FFAT) are periplasmic. A helical transmembrane segment spans residues 254-278 (GEQGTRVFGYVTTMGELLNASIMFF). Over 279–288 (APLIINRIGG) the chain is Cytoplasmic. Residues 289–308 (KNALLLAGTIMSVRIIGSSF) form a helical membrane-spanning segment. Topologically, residues 309-311 (ATS) are periplasmic. A helical membrane pass occupies residues 312–334 (ALEVVILKTLHMFEVPFLLVGCF). The Cytoplasmic segment spans residues 335–346 (KYITSQFEVRFS). A helical membrane pass occupies residues 347 to 374 (ATIYLVCFCFFKQLAMIFMSVLAGNMYE). Residues 375-377 (SIG) are Periplasmic-facing. Residues 378-398 (FQGAYLVLGLVALGFTLISVF) traverse the membrane as a helical segment. Residues 399 to 417 (TLSGPGPLSLLRRQVNEVA) lie on the Cytoplasmic side of the membrane.

In terms of assembly, monomer.

The protein resides in the cell inner membrane. It catalyses the reaction lactose(in) + H(+)(in) = lactose(out) + H(+)(out). The enzyme catalyses melibiose(in) + H(+)(in) = melibiose(out) + H(+)(out). Inhibited by the proton ionophore carbonyl cyanide m-chlorophenylhydrazone (CCCP). Functionally, responsible for transport of beta-galactosides into the cell, with the concomitant import of a proton (symport system). Can transport lactose, melibiose, the synthetic disaccharide lactulose or the analog methyl-1-thio-beta,D-galactopyranoside (TMG), but not sucrose or fructose. The substrate specificity is directed toward the galactopyranosyl moiety of the substrate. This chain is Lactose permease, found in Escherichia coli (strain K12).